A 505-amino-acid polypeptide reads, in one-letter code: Maturase K (505 aa).

It belongs to the intron maturase 2 family. MatK subfamily.

It is found in the plastid. The protein resides in the chloroplast. Functionally, usually encoded in the trnK tRNA gene intron. Probably assists in splicing its own and other chloroplast group II introns. This is Maturase K from Calycanthus occidentalis (Spice bush).